The chain runs to 359 residues: Methyltransferase eqxD (359 aa).

S-adenosyl-L-methionine-binding positions include 198-199 (GG), Asp224, 248-249 (SF), Arg264, and Arg265.

It belongs to the class I-like SAM-binding methyltransferase superfamily. Cation-independent O-methyltransferase family.

The catalysed reaction is trichosetin + S-adenosyl-L-methionine = equisetin + S-adenosyl-L-homocysteine + H(+). The protein operates within mycotoxin biosynthesis. Its function is as follows. Methyltransferase; part of the gene cluster that mediates the biosynthesis of equisetin, a trans-fused decalin-containing tetramic acid with antimicrobial activity. The PKS module of eqxS together with the enoylreductase eqxC catalyze the formation of the polyketide unit which is then conjugated to L-serine by the condensation domain of the eqxS NRPS module. Activity of the Dieckmann cyclase domain (RED) results in release of the Dieckmann product intermediate. Diels-Alderase eqx3 is involved in endo-selective Diels-Alder cycloaddition to form the decalin ring, leading to the production of N-desmethylequisetin also called trichosetin. Subsequent N-methylation is carried out by eqxD to give equisetin. The polypeptide is Methyltransferase eqxD (Fusarium heterosporum).